The primary structure comprises 91 residues: Probable Fe(2+)-trafficking protein (91 aa).

Belongs to the Fe(2+)-trafficking protein family.

In terms of biological role, could be a mediator in iron transactions between iron acquisition and iron-requiring processes, such as synthesis and/or repair of Fe-S clusters in biosynthetic enzymes. The chain is Probable Fe(2+)-trafficking protein from Ralstonia pickettii (strain 12J).